Consider the following 61-residue polypeptide: MKYTEIKDKTAAELATMLKEKKVLLFTLKQKLKTMQLTNPKEISQVKKDIARINTAINALR.

The protein belongs to the universal ribosomal protein uL29 family.

This is Large ribosomal subunit protein uL29 from Campylobacter jejuni subsp. jejuni serotype O:6 (strain 81116 / NCTC 11828).